Reading from the N-terminus, the 274-residue chain is Rhamnulose-1-phosphate aldolase (274 aa).

The active site involves Glu-117. The Zn(2+) site is built by His-141, His-143, and His-212.

It belongs to the aldolase class II family. RhaD subfamily. In terms of assembly, homotetramer. It depends on Zn(2+) as a cofactor.

It is found in the cytoplasm. The catalysed reaction is L-rhamnulose 1-phosphate = (S)-lactaldehyde + dihydroxyacetone phosphate. The protein operates within carbohydrate degradation; L-rhamnose degradation; glycerone phosphate from L-rhamnose: step 3/3. Functionally, catalyzes the reversible cleavage of L-rhamnulose-1-phosphate to dihydroxyacetone phosphate (DHAP) and L-lactaldehyde. This chain is Rhamnulose-1-phosphate aldolase, found in Yersinia pseudotuberculosis serotype I (strain IP32953).